The sequence spans 396 residues: Elongation factor Tu (396 aa).

The tr-type G domain maps to 10–205 (KPHVNIGTIG…ACDDNIPDPV (196 aa)). A G1 region spans residues 19 to 26 (GHVDHGKT). 19–26 (GHVDHGKT) lines the GTP pocket. T26 lines the Mg(2+) pocket. Residues 62–66 (GITIN) form a G2 region. The G3 stretch occupies residues 83–86 (DAPG). GTP-binding positions include 83–87 (DAPGH) and 138–141 (NKCD). A G4 region spans residues 138-141 (NKCD). The interval 175–177 (SAL) is G5.

Belongs to the TRAFAC class translation factor GTPase superfamily. Classic translation factor GTPase family. EF-Tu/EF-1A subfamily. In terms of assembly, monomer.

Its subcellular location is the cytoplasm. The catalysed reaction is GTP + H2O = GDP + phosphate + H(+). In terms of biological role, GTP hydrolase that promotes the GTP-dependent binding of aminoacyl-tRNA to the A-site of ribosomes during protein biosynthesis. The polypeptide is Elongation factor Tu (Corynebacterium efficiens (strain DSM 44549 / YS-314 / AJ 12310 / JCM 11189 / NBRC 100395)).